The sequence spans 151 residues: Deoxyuridine 5'-triphosphate nucleotidohydrolase (151 aa).

Substrate contacts are provided by residues 70–72 (RSG), asparagine 83, 87–89 (LID), and methionine 97.

Belongs to the dUTPase family. Mg(2+) is required as a cofactor.

The enzyme catalyses dUTP + H2O = dUMP + diphosphate + H(+). It participates in pyrimidine metabolism; dUMP biosynthesis; dUMP from dCTP (dUTP route): step 2/2. In terms of biological role, this enzyme is involved in nucleotide metabolism: it produces dUMP, the immediate precursor of thymidine nucleotides and it decreases the intracellular concentration of dUTP so that uracil cannot be incorporated into DNA. The polypeptide is Deoxyuridine 5'-triphosphate nucleotidohydrolase (Pseudomonas putida (strain ATCC 700007 / DSM 6899 / JCM 31910 / BCRC 17059 / LMG 24140 / F1)).